A 234-amino-acid chain; its full sequence is Sugar fermentation stimulation protein A (234 aa).

Positions 201-220 form a DNA-binding region, H-T-H motif; sequence LLSEAQNKGVEVLAYKAELS.

This sequence belongs to the SfsA family.

Its function is as follows. Binds to DNA non-specifically. Could be a regulatory factor involved in maltose metabolism. In Salmonella agona (strain SL483), this protein is Sugar fermentation stimulation protein A.